The sequence spans 467 residues: Histone acetyltransferase type B catalytic subunit (467 aa).

The interval M1–S24 is disordered. Residues I249–V251 and Q256–S262 contribute to the acetyl-CoA site. E283 functions as the Proton donor/acceptor in the catalytic mechanism.

The protein belongs to the HAT1 family.

The protein resides in the nucleus. Its subcellular location is the cytoplasm. It catalyses the reaction L-lysyl-[protein] + acetyl-CoA = N(6)-acetyl-L-lysyl-[protein] + CoA + H(+). Functionally, acetylates soluble but not nucleosomal H4. Acetylates 'Lys-12' of histone H4. The polypeptide is Histone acetyltransferase type B catalytic subunit (HAG2) (Arabidopsis thaliana (Mouse-ear cress)).